The chain runs to 894 residues: Alanine--tRNA ligase (894 aa).

The Zn(2+) site is built by His-587, His-591, Cys-691, and His-695. The interval 739–758 (AEGDRAAEEAKGRLQEERDA) is disordered.

Belongs to the class-II aminoacyl-tRNA synthetase family. The cofactor is Zn(2+).

The protein resides in the cytoplasm. It catalyses the reaction tRNA(Ala) + L-alanine + ATP = L-alanyl-tRNA(Ala) + AMP + diphosphate. Catalyzes the attachment of alanine to tRNA(Ala) in a two-step reaction: alanine is first activated by ATP to form Ala-AMP and then transferred to the acceptor end of tRNA(Ala). Also edits incorrectly charged Ser-tRNA(Ala) and Gly-tRNA(Ala) via its editing domain. In Cenarchaeum symbiosum (strain A), this protein is Alanine--tRNA ligase.